Here is a 148-residue protein sequence, read N- to C-terminus: Large ribosomal subunit protein uL15 (148 aa).

Basic and acidic residues predominate over residues 1-10 (MQLHNLEYKK). The disordered stretch occupies residues 1–42 (MQLHNLEYKKGSRNHKEKRVGRGHGSGLGKTSGRGQDGQKAR). Positions 11-22 (GSRNHKEKRVGR) are enriched in basic residues. Positions 23–36 (GHGSGLGKTSGRGQ) are enriched in gly residues.

This sequence belongs to the universal ribosomal protein uL15 family. Part of the 50S ribosomal subunit.

Binds to the 23S rRNA. This chain is Large ribosomal subunit protein uL15, found in Ureaplasma parvum serovar 3 (strain ATCC 27815 / 27 / NCTC 11736).